We begin with the raw amino-acid sequence, 457 residues long: tRNA-2-methylthio-N(6)-dimethylallyladenosine synthase (457 aa).

Residues 3 to 120 enclose the MTTase N-terminal domain; the sequence is KKVYVKTFGC…LPQMIDARRE (118 aa). Residues Cys12, Cys49, Cys83, Cys157, Cys161, and Cys164 each contribute to the [4Fe-4S] cluster site. One can recognise a Radical SAM core domain in the interval 143–377; the sequence is RVEGPSAFVS…QATIEENVAR (235 aa). Residues 380 to 447 enclose the TRAM domain; sequence QSMVGKVERI…PHSLRGELVL (68 aa).

Belongs to the methylthiotransferase family. MiaB subfamily. Monomer. The cofactor is [4Fe-4S] cluster.

It localises to the cytoplasm. It carries out the reaction N(6)-dimethylallyladenosine(37) in tRNA + (sulfur carrier)-SH + AH2 + 2 S-adenosyl-L-methionine = 2-methylsulfanyl-N(6)-dimethylallyladenosine(37) in tRNA + (sulfur carrier)-H + 5'-deoxyadenosine + L-methionine + A + S-adenosyl-L-homocysteine + 2 H(+). Catalyzes the methylthiolation of N6-(dimethylallyl)adenosine (i(6)A), leading to the formation of 2-methylthio-N6-(dimethylallyl)adenosine (ms(2)i(6)A) at position 37 in tRNAs that read codons beginning with uridine. The sequence is that of tRNA-2-methylthio-N(6)-dimethylallyladenosine synthase from Burkholderia lata (strain ATCC 17760 / DSM 23089 / LMG 22485 / NCIMB 9086 / R18194 / 383).